The sequence spans 182 residues: Probable phosphoheptose isomerase (182 aa).

An SIS domain is found at 29–182; that stretch reads ISSAISSGNK…MICAMIDEKF (154 aa). Residue 44 to 46 participates in substrate binding; it reads NGG. Positions 53 and 57 each coordinate Zn(2+). Substrate-binding positions include Glu-57, 86 to 87, 112 to 114, Ser-117, and Gln-164; these read ND and STS. Gln-164 and His-172 together coordinate Zn(2+).

Belongs to the SIS family. GmhA subfamily. Zn(2+) serves as cofactor.

It localises to the cytoplasm. It carries out the reaction 2 D-sedoheptulose 7-phosphate = D-glycero-alpha-D-manno-heptose 7-phosphate + D-glycero-beta-D-manno-heptose 7-phosphate. It participates in carbohydrate biosynthesis; D-glycero-D-manno-heptose 7-phosphate biosynthesis; D-glycero-alpha-D-manno-heptose 7-phosphate and D-glycero-beta-D-manno-heptose 7-phosphate from sedoheptulose 7-phosphate: step 1/1. Its function is as follows. Catalyzes the isomerization of sedoheptulose 7-phosphate in D-glycero-D-manno-heptose 7-phosphate. The polypeptide is Probable phosphoheptose isomerase (Thermoplasma acidophilum (strain ATCC 25905 / DSM 1728 / JCM 9062 / NBRC 15155 / AMRC-C165)).